Consider the following 395-residue polypeptide: Protein TAMALIN (395 aa).

The segment at 1 to 52 (MTLRRLRKLQQKEEAAATPDPAARTPDSEVAPAAPVPTPGPPAAAATPGPPA) is disordered. The segment covering 16–33 (AATPDPAARTPDSEVAPA) has biased composition (low complexity). The residue at position 77 (Thr77) is a Phosphothreonine. A Phosphoserine modification is found at Ser94. A PDZ domain is found at 101 to 190 (VLTLEKEDNQ…VLRLETLYGT (90 aa)). An interaction with PSCD3 region spans residues 181 to 258 (VLRLETLYGT…GAGLLPGSLP (78 aa)). Tyr237 carries the phosphotyrosine modification. Arg270 is modified (omega-N-methylarginine). Residues 293–349 (SEPPALPPPPPPARAFGPGPAETPAVGPGPGPRAALSRSASVRCAGPGGGGGGGAPG) form a disordered region. A compositionally biased stretch (pro residues) spans 296 to 305 (PALPPPPPPA). Positions 338–348 (GPGGGGGGGAP) are enriched in gly residues. Position 387 is a phosphoserine (Ser387).

As to quaternary structure, heteromer. Composed of TAMALIN, CYTH2 and at least one GRM1. Also interacts with CYTH3, GRM2, GRM3 and GRM5.

The protein localises to the cytoplasm. The protein resides in the perinuclear region. It is found in the cell membrane. Its subcellular location is the postsynaptic cell membrane. Plays a role in intracellular trafficking and contributes to the macromolecular organization of group 1 metabotropic glutamate receptors (mGluRs) at synapses. The protein is Protein TAMALIN of Homo sapiens (Human).